A 514-amino-acid chain; its full sequence is Bifunctional purine biosynthesis protein PurH (514 aa).

The 146-residue stretch at 1 to 146 folds into the MGS-like domain; it reads MARLALLSVS…KNFAHLAVLC (146 aa).

This sequence belongs to the PurH family.

It catalyses the reaction (6R)-10-formyltetrahydrofolate + 5-amino-1-(5-phospho-beta-D-ribosyl)imidazole-4-carboxamide = 5-formamido-1-(5-phospho-D-ribosyl)imidazole-4-carboxamide + (6S)-5,6,7,8-tetrahydrofolate. The catalysed reaction is IMP + H2O = 5-formamido-1-(5-phospho-D-ribosyl)imidazole-4-carboxamide. It functions in the pathway purine metabolism; IMP biosynthesis via de novo pathway; 5-formamido-1-(5-phospho-D-ribosyl)imidazole-4-carboxamide from 5-amino-1-(5-phospho-D-ribosyl)imidazole-4-carboxamide (10-formyl THF route): step 1/1. The protein operates within purine metabolism; IMP biosynthesis via de novo pathway; IMP from 5-formamido-1-(5-phospho-D-ribosyl)imidazole-4-carboxamide: step 1/1. This is Bifunctional purine biosynthesis protein PurH from Nostoc punctiforme (strain ATCC 29133 / PCC 73102).